The sequence spans 1370 residues: Zinc finger MYM-type protein 3 (1370 aa).

3 stretches are compositionally biased toward low complexity: residues Met-1–Pro-12, Ala-40–Ala-56, and Gly-130–Ala-146. 2 disordered regions span residues Met-1–Val-73 and Gly-85–Lys-310. Over residues Thr-227–Val-255 the composition is skewed to basic and acidic residues. A phosphoserine mark is found at Ser-265 and Ser-269. The span at Ser-265 to Phe-281 shows a compositional bias: acidic residues. Glycyl lysine isopeptide (Lys-Gly) (interchain with G-Cter in SUMO2) cross-links involve residues Lys-310, Lys-322, and Lys-330. 9 MYM-type zinc fingers span residues Gln-334 to Ser-368, His-380 to Val-424, His-431 to Gly-466, Lys-479 to Leu-513, Ser-523 to Tyr-561, Tyr-569 to Val-606, Phe-614 to Leu-648, Lys-655 to Glu-694, and Trp-701 to Ile-735. Over residues Asn-761–Val-789 the composition is skewed to polar residues. The tract at residues Asn-761 to Asn-831 is disordered. Glycyl lysine isopeptide (Lys-Gly) (interchain with G-Cter in SUMO2) cross-links involve residues Lys-780 and Lys-788. Over residues Glu-790–Asp-799 the composition is skewed to basic and acidic residues. Thr-797 carries the phosphothreonine modification. A Glycyl lysine isopeptide (Lys-Gly) (interchain with G-Cter in SUMO2) cross-link involves residue Lys-806. Residues Val-816 to Thr-827 show a composition bias toward pro residues. 2 positions are modified to phosphothreonine: Thr-818 and Thr-827. Glycyl lysine isopeptide (Lys-Gly) (interchain with G-Cter in SUMO2) cross-links involve residues Lys-848, Lys-862, Lys-921, and Lys-1276.

As to quaternary structure, may be a component of a BHC histone deacetylase complex that contains HDAC1, HDAC2, HMG20B/BRAF35, KDM1A, RCOR1/CoREST, PHF21A/BHC80, ZMYM2, ZNF217, ZMYM3, GSE1 and GTF2I. Ubiquitously expressed in all embryonic stages and adult tissues.

Its subcellular location is the nucleus. Plays a role in the regulation of cell morphology and cytoskeletal organization. This is Zinc finger MYM-type protein 3 (Zmym3) from Mus musculus (Mouse).